A 180-amino-acid chain; its full sequence is Large ribosomal subunit protein uL5 (180 aa).

The protein belongs to the universal ribosomal protein uL5 family. As to quaternary structure, part of the 50S ribosomal subunit; part of the 5S rRNA/L5/L18/L25 subcomplex. Contacts the 5S rRNA and the P site tRNA. Forms a bridge to the 30S subunit in the 70S ribosome.

Functionally, this is one of the proteins that bind and probably mediate the attachment of the 5S RNA into the large ribosomal subunit, where it forms part of the central protuberance. In the 70S ribosome it contacts protein S13 of the 30S subunit (bridge B1b), connecting the 2 subunits; this bridge is implicated in subunit movement. Contacts the P site tRNA; the 5S rRNA and some of its associated proteins might help stabilize positioning of ribosome-bound tRNAs. This chain is Large ribosomal subunit protein uL5, found in Ralstonia nicotianae (strain ATCC BAA-1114 / GMI1000) (Ralstonia solanacearum).